A 103-amino-acid polypeptide reads, in one-letter code: Large ribosomal subunit protein bL21 (103 aa).

Belongs to the bacterial ribosomal protein bL21 family. Part of the 50S ribosomal subunit. Contacts protein L20.

Its function is as follows. This protein binds to 23S rRNA in the presence of protein L20. The protein is Large ribosomal subunit protein bL21 of Legionella pneumophila (strain Paris).